Here is a 475-residue protein sequence, read N- to C-terminus: Adenosylhomocysteinase (475 aa).

The substrate site is built by T60, D133, and E198. 199 to 201 is an NAD(+) binding site; it reads TTT. Substrate-binding residues include K228 and D232. Residues N233, 262-267, E285, N320, 341-343, and N389 contribute to the NAD(+) site; these read GYGDVG and IGH.

This sequence belongs to the adenosylhomocysteinase family. Requires NAD(+) as cofactor.

Its subcellular location is the cytoplasm. It catalyses the reaction S-adenosyl-L-homocysteine + H2O = L-homocysteine + adenosine. It functions in the pathway amino-acid biosynthesis; L-homocysteine biosynthesis; L-homocysteine from S-adenosyl-L-homocysteine: step 1/1. Functionally, may play a key role in the regulation of the intracellular concentration of adenosylhomocysteine. This is Adenosylhomocysteinase from Syntrophotalea carbinolica (strain DSM 2380 / NBRC 103641 / GraBd1) (Pelobacter carbinolicus).